Consider the following 392-residue polypeptide: Formate-dependent phosphoribosylglycinamide formyltransferase (392 aa).

N(1)-(5-phospho-beta-D-ribosyl)glycinamide contacts are provided by residues 22 to 23 and Glu-82; that span reads EL. ATP-binding positions include Arg-114, Lys-155, 160 to 165, 195 to 198, and Glu-203; these read SSGKGQ and EGVV. One can recognise an ATP-grasp domain in the interval 119 to 308; that stretch reads RLAAEELGLP…EFALHVRAFL (190 aa). The Mg(2+) site is built by Glu-267 and Glu-279. N(1)-(5-phospho-beta-D-ribosyl)glycinamide is bound by residues Asp-286, Lys-355, and 362 to 363; that span reads RR.

This sequence belongs to the PurK/PurT family. Homodimer.

It catalyses the reaction N(1)-(5-phospho-beta-D-ribosyl)glycinamide + formate + ATP = N(2)-formyl-N(1)-(5-phospho-beta-D-ribosyl)glycinamide + ADP + phosphate + H(+). It functions in the pathway purine metabolism; IMP biosynthesis via de novo pathway; N(2)-formyl-N(1)-(5-phospho-D-ribosyl)glycinamide from N(1)-(5-phospho-D-ribosyl)glycinamide (formate route): step 1/1. Involved in the de novo purine biosynthesis. Catalyzes the transfer of formate to 5-phospho-ribosyl-glycinamide (GAR), producing 5-phospho-ribosyl-N-formylglycinamide (FGAR). Formate is provided by PurU via hydrolysis of 10-formyl-tetrahydrofolate. This is Formate-dependent phosphoribosylglycinamide formyltransferase from Salmonella schwarzengrund (strain CVM19633).